The chain runs to 614 residues: Probable Xaa-Pro aminopeptidase P (614 aa).

Residues D409, D420, E518, and E532 each contribute to the Mn(2+) site.

It belongs to the peptidase M24B family. The cofactor is Mn(2+).

The enzyme catalyses Release of any N-terminal amino acid, including proline, that is linked to proline, even from a dipeptide or tripeptide.. Catalyzes the removal of a penultimate prolyl residue from the N-termini of peptides. The protein is Probable Xaa-Pro aminopeptidase P (ampp) of Aspergillus niger (strain ATCC MYA-4892 / CBS 513.88 / FGSC A1513).